The following is a 495-amino-acid chain: MLHTEGHALLRAVGQGKLRLARLLLEGGAYVNEGDAQGETALMAACRARYDDPQNKARMVRYLLEQGADPNIADRLGRTALMHACAGGGGAAVASLLLAHGADPSVRDHAGASALVHALDRGDRETLATLLDACKAKGTEVIIITTDTSPSGTKKTRQYLNSPPSPGVEDPAPAPPSPGVCTSPSEVQLQTAGGGRGLLSPRAQEEEEKRDVFEFPLPKSPDDPSPSEPLPKPPRHPPKPLKRLNSEPWGLVAPPQPVPPAEGRPGLERLAAEFNGLTLTGRPRLSRRHSTEGPEDPPPWAEKVTGGGPLSRRNTAPEAQESGLPSGLRQKLSRMESVELDTPGHFCPDSPESSRLSLERRRYSASPLTLPPAGSVSSPRQSQESLPGAVSPLSGRRRSPGLLERRGSGTLLLDHISQTRPGFLPPLNVSPHPPIPDIRPQPGGRAPSLPAPPHSGAPGSPRTKRKLVRRHSMQTEQIRLLGGFQSLGGPGEPGR.

ANK repeat units follow at residues 4–33 (TEGH…YVNE), 37–72 (QGET…DPNI), 76–106 (LGRT…DPSV), and 110–139 (AGAS…AKGT). Gln-15 is modified (N5-methylglutamine). Polar residues-rich tracts occupy residues 147 to 162 (DTSP…YLNS) and 180 to 191 (VCTSPSEVQLQT). The disordered stretch occupies residues 147-495 (DTSPSGTKKT…SLGGPGEPGR (349 aa)). Residues 203 to 213 (AQEEEEKRDVF) are compositionally biased toward basic and acidic residues. Positions 223-232 (DPSPSEPLPK) are enriched in pro residues. Positions 233 to 242 (PPRHPPKPLK) are enriched in basic residues. The residue at position 315 (Thr-315) is a Phosphothreonine. Polar residues predominate over residues 375 to 385 (SVSSPRQSQES). Residues 462–472 (RTKRKLVRRHS) show a composition bias toward basic residues. Over residues 485-495 (QSLGGPGEPGR) the composition is skewed to gly residues.

Belongs to the ANKRD34 family. Methylated at Gln-15 by N6AMT1.

The polypeptide is Ankyrin repeat domain-containing protein 34A (Ankrd34a) (Rattus norvegicus (Rat)).